A 179-amino-acid chain; its full sequence is Large ribosomal subunit protein uL5 (179 aa).

This sequence belongs to the universal ribosomal protein uL5 family. As to quaternary structure, part of the 50S ribosomal subunit; part of the 5S rRNA/L5/L18/L25 subcomplex. Contacts the 5S rRNA and the P site tRNA. Forms a bridge to the 30S subunit in the 70S ribosome.

This is one of the proteins that bind and probably mediate the attachment of the 5S RNA into the large ribosomal subunit, where it forms part of the central protuberance. In the 70S ribosome it contacts protein S13 of the 30S subunit (bridge B1b), connecting the 2 subunits; this bridge is implicated in subunit movement. Contacts the P site tRNA; the 5S rRNA and some of its associated proteins might help stabilize positioning of ribosome-bound tRNAs. This Microcystis aeruginosa (strain NIES-843 / IAM M-2473) protein is Large ribosomal subunit protein uL5.